The following is a 155-amino-acid chain: Crossover junction endodeoxyribonuclease RuvC (155 aa).

Catalysis depends on residues Asp-7, Glu-68, and Asp-140. Residues Asp-7, Glu-68, and Asp-140 each contribute to the Mg(2+) site.

It belongs to the RuvC family. In terms of assembly, homodimer which binds Holliday junction (HJ) DNA. The HJ becomes 2-fold symmetrical on binding to RuvC with unstacked arms; it has a different conformation from HJ DNA in complex with RuvA. In the full resolvosome a probable DNA-RuvA(4)-RuvB(12)-RuvC(2) complex forms which resolves the HJ. Requires Mg(2+) as cofactor.

The protein localises to the cytoplasm. The enzyme catalyses Endonucleolytic cleavage at a junction such as a reciprocal single-stranded crossover between two homologous DNA duplexes (Holliday junction).. The RuvA-RuvB-RuvC complex processes Holliday junction (HJ) DNA during genetic recombination and DNA repair. Endonuclease that resolves HJ intermediates. Cleaves cruciform DNA by making single-stranded nicks across the HJ at symmetrical positions within the homologous arms, yielding a 5'-phosphate and a 3'-hydroxyl group; requires a central core of homology in the junction. The consensus cleavage sequence is 5'-(A/T)TT(C/G)-3'. Cleavage occurs on the 3'-side of the TT dinucleotide at the point of strand exchange. HJ branch migration catalyzed by RuvA-RuvB allows RuvC to scan DNA until it finds its consensus sequence, where it cleaves and resolves the cruciform DNA. In Prochlorococcus marinus (strain SARG / CCMP1375 / SS120), this protein is Crossover junction endodeoxyribonuclease RuvC.